Consider the following 686-residue polypeptide: WD repeat-containing protein 93 (686 aa).

A compositionally biased stretch (polar residues) spans 1–10 (MSFPRGSQTQ). A disordered region spans residues 1–40 (MSFPRGSQTQKIKHPIGTRKGPLEVPPPTEKDWPKDDEQD). Basic and acidic residues predominate over residues 29–40 (TEKDWPKDDEQD). The WD repeat unit spans residues 410-449 (PCAAPIAVSQLSCSSSYLVLACEDGVLTLWDLAKGFPLGV).

The polypeptide is WD repeat-containing protein 93 (WDR93) (Homo sapiens (Human)).